A 388-amino-acid polypeptide reads, in one-letter code: S-adenosylmethionine synthase 1 (388 aa).

E11 contributes to the Mg(2+) binding site. H17 serves as a coordination point for ATP. E45 serves as a coordination point for K(+). The L-methionine site is built by E58 and Q101. Residues 168-170 (DAK), 233-236 (SGRF), D244, 250-251 (RK), A267, K271, and K275 each bind ATP. D244 contributes to the L-methionine binding site. K275 contacts L-methionine.

This sequence belongs to the AdoMet synthase family. In terms of assembly, homotetramer. The cofactor is Mn(2+). It depends on Mg(2+) as a cofactor. Co(2+) serves as cofactor. K(+) is required as a cofactor. Mostly in Roots.

It localises to the cytoplasm. The enzyme catalyses L-methionine + ATP + H2O = S-adenosyl-L-methionine + phosphate + diphosphate. The protein operates within amino-acid biosynthesis; S-adenosyl-L-methionine biosynthesis; S-adenosyl-L-methionine from L-methionine: step 1/1. Catalyzes the formation of S-adenosylmethionine from methionine and ATP. The reaction comprises two steps that are both catalyzed by the same enzyme: formation of S-adenosylmethionine (AdoMet) and triphosphate, and subsequent hydrolysis of the triphosphate. The polypeptide is S-adenosylmethionine synthase 1 (SAMS1) (Pinus contorta (Shore pine)).